The chain runs to 54 residues: UPF0391 membrane protein Sde_0270 (54 aa).

The next 2 helical transmembrane spans lie at 6–26 and 29–49; these read IVFL…IAGV and GIAK…LVIG.

Belongs to the UPF0391 family.

It is found in the cell membrane. This is UPF0391 membrane protein Sde_0270 from Saccharophagus degradans (strain 2-40 / ATCC 43961 / DSM 17024).